The following is a 319-amino-acid chain: ATP-dependent 6-phosphofructokinase (319 aa).

Residue Gly-11 coordinates ATP. 21–25 (RAVVR) is an ADP binding site. Residues 72-73 (RS) and 102-105 (GDGS) contribute to the ATP site. Residue Asp-103 participates in Mg(2+) binding. Position 125 to 127 (125 to 127 (TID)) interacts with substrate. The Proton acceptor role is filled by Asp-127. Arg-154 lines the ADP pocket. Substrate contacts are provided by residues Arg-162 and 169–171 (MGR). Residues 185–187 (GAE), Arg-211, and 213–215 (KKH) each bind ADP. Substrate-binding positions include Glu-222, Arg-243, and 249-252 (HIQR).

Belongs to the phosphofructokinase type A (PFKA) family. ATP-dependent PFK group I subfamily. Prokaryotic clade 'B1' sub-subfamily. In terms of assembly, homotetramer. Mg(2+) is required as a cofactor.

Its subcellular location is the cytoplasm. The enzyme catalyses beta-D-fructose 6-phosphate + ATP = beta-D-fructose 1,6-bisphosphate + ADP + H(+). It participates in carbohydrate degradation; glycolysis; D-glyceraldehyde 3-phosphate and glycerone phosphate from D-glucose: step 3/4. Its activity is regulated as follows. Allosterically activated by ADP and other diphosphonucleosides, and allosterically inhibited by phosphoenolpyruvate. Functionally, catalyzes the phosphorylation of D-fructose 6-phosphate to fructose 1,6-bisphosphate by ATP, the first committing step of glycolysis. In Oceanobacillus iheyensis (strain DSM 14371 / CIP 107618 / JCM 11309 / KCTC 3954 / HTE831), this protein is ATP-dependent 6-phosphofructokinase.